The chain runs to 187 residues: Core-binding factor subunit beta (187 aa).

A Phosphoserine; by CK2 modification is found at S10. The disordered stretch occupies residues 139–187; that stretch reads AQQAFEEARRRTREFEDRDRSHREEMEARRQQDPSPGSNLGGGDDLKLR. Residues 144–170 are compositionally biased toward basic and acidic residues; the sequence is EEARRRTREFEDRDRSHREEMEARRQQ. A Phosphoserine; by PKC modification is found at S159.

It belongs to the CBF-beta family. As to quaternary structure, heterodimer with RUNX1, RUNX2 and RUNX3. Interacts with COPRS. Found in a complex with PRMT5 and RUNX1. In terms of tissue distribution, expressed in all tissues tested. Highest level in thymus, but also abundantly expressed in muscle, lung and brain.

It is found in the nucleus. Forms the heterodimeric complex core-binding factor (CBF) with RUNX family proteins (RUNX1, RUNX2, and RUNX3). RUNX members modulate the transcription of their target genes through recognizing the core consensus binding sequence 5'-TGTGGT-3', or very rarely, 5'-TGCGGT-3', within their regulatory regions via their runt domain, while CBFB is a non-DNA-binding regulatory subunit that allosterically enhances the sequence-specific DNA-binding capacity of RUNX. The heterodimers bind to the core site of a number of enhancers and promoters, including murine leukemia virus, polyomavirus enhancer, T-cell receptor enhancers, LCK, IL3 and GM-CSF promoters. CBF complexes repress ZBTB7B transcription factor during cytotoxic (CD8+) T cell development. They bind to RUNX-binding sequence within the ZBTB7B locus acting as transcriptional silencer and allowing for cytotoxic T cell differentiation. This Mus musculus (Mouse) protein is Core-binding factor subunit beta (Cbfb).